The following is a 209-amino-acid chain: Large ribosomal subunit protein uL3 (209 aa).

A disordered region spans residues 133 to 152; it reads THGNSLSHRVPGSIGQNQTP. Glutamine 150 carries the N5-methylglutamine modification.

The protein belongs to the universal ribosomal protein uL3 family. In terms of assembly, part of the 50S ribosomal subunit. Forms a cluster with proteins L14 and L19. In terms of processing, methylated by PrmB.

Its function is as follows. One of the primary rRNA binding proteins, it binds directly near the 3'-end of the 23S rRNA, where it nucleates assembly of the 50S subunit. This Shigella sonnei (strain Ss046) protein is Large ribosomal subunit protein uL3.